We begin with the raw amino-acid sequence, 158 residues long: Cyclic pyranopterin monophosphate synthase (158 aa).

Substrate is bound by residues 76 to 78 (LCH) and 114 to 115 (ME). Asp129 is a catalytic residue.

Belongs to the MoaC family. In terms of assembly, homohexamer; trimer of dimers.

It catalyses the reaction (8S)-3',8-cyclo-7,8-dihydroguanosine 5'-triphosphate = cyclic pyranopterin phosphate + diphosphate. Its pathway is cofactor biosynthesis; molybdopterin biosynthesis. Catalyzes the conversion of (8S)-3',8-cyclo-7,8-dihydroguanosine 5'-triphosphate to cyclic pyranopterin monophosphate (cPMP). The polypeptide is Cyclic pyranopterin monophosphate synthase (Shewanella sediminis (strain HAW-EB3)).